We begin with the raw amino-acid sequence, 447 residues long: Dihydroorotase (447 aa).

Zn(2+)-binding residues include His-81 and His-83. Residues 83–85 (HFR) and Asn-115 each bind substrate. Asp-171, His-198, and His-252 together coordinate Zn(2+). Asn-298 lines the substrate pocket. Asp-325 lines the Zn(2+) pocket. Asp-325 is a catalytic residue. Residues His-329 and 343–344 (FG) contribute to the substrate site.

This sequence belongs to the metallo-dependent hydrolases superfamily. DHOase family. Class I DHOase subfamily. Zn(2+) is required as a cofactor.

The catalysed reaction is (S)-dihydroorotate + H2O = N-carbamoyl-L-aspartate + H(+). It functions in the pathway pyrimidine metabolism; UMP biosynthesis via de novo pathway; (S)-dihydroorotate from bicarbonate: step 3/3. Its function is as follows. Catalyzes the reversible cyclization of carbamoyl aspartate to dihydroorotate. The protein is Dihydroorotase of Ehrlichia canis (strain Jake).